An 86-amino-acid chain; its full sequence is MERTQRKVRVGKVVSDKMEKTIVVAVEMKVRHPLYHRTITQTKKFKAHDENNEAKIGDSVVIMETRPISKDKRWRLVEITERAVVL.

This sequence belongs to the universal ribosomal protein uS17 family. As to quaternary structure, part of the 30S ribosomal subunit.

Its function is as follows. One of the primary rRNA binding proteins, it binds specifically to the 5'-end of 16S ribosomal RNA. This chain is Small ribosomal subunit protein uS17, found in Desulfitobacterium hafniense (strain DSM 10664 / DCB-2).